The primary structure comprises 298 residues: Acetylglutamate kinase (298 aa).

Substrate contacts are provided by residues 69-70, Arg91, and Asn191; that span reads GG.

The protein belongs to the acetylglutamate kinase family. ArgB subfamily.

The protein resides in the cytoplasm. It carries out the reaction N-acetyl-L-glutamate + ATP = N-acetyl-L-glutamyl 5-phosphate + ADP. It participates in amino-acid biosynthesis; L-arginine biosynthesis; N(2)-acetyl-L-ornithine from L-glutamate: step 2/4. Its function is as follows. Catalyzes the ATP-dependent phosphorylation of N-acetyl-L-glutamate. The polypeptide is Acetylglutamate kinase (Neisseria meningitidis serogroup C / serotype 2a (strain ATCC 700532 / DSM 15464 / FAM18)).